Here is a 596-residue protein sequence, read N- to C-terminus: Ferredoxin--nitrite reductase, chloroplastic (596 aa).

Residues 1–28 constitute a chloroplast transit peptide; it reads MASSASLQRFLPPYPHAAASRCRPPGVR. Residues 1–56 are disordered; sequence MASSASLQRFLPPYPHAAASRCRPPGVRARPVQSSTVSAPSSSTPAADEAVSAERL. Over residues 31–47 the composition is skewed to low complexity; that stretch reads PVQSSTVSAPSSSTPAA. Positions 474, 480, 515, and 519 each coordinate [4Fe-4S] cluster. Cys-519 serves as a coordination point for siroheme.

This sequence belongs to the nitrite and sulfite reductase 4Fe-4S domain family. In terms of assembly, monomer. Siroheme is required as a cofactor. The cofactor is [4Fe-4S] cluster.

The protein localises to the plastid. The protein resides in the chloroplast. It carries out the reaction 6 oxidized [2Fe-2S]-[ferredoxin] + NH4(+) + 2 H2O = nitrite + 6 reduced [2Fe-2S]-[ferredoxin] + 8 H(+). It participates in nitrogen metabolism; nitrate reduction (assimilation). In terms of biological role, catalyzes the six-electron reduction of nitrite to ammonium. The chain is Ferredoxin--nitrite reductase, chloroplastic from Oryza sativa subsp. japonica (Rice).